Consider the following 358-residue polypeptide: Aminomethyltransferase (358 aa).

This sequence belongs to the GcvT family. The glycine cleavage system is composed of four proteins: P, T, L and H.

It catalyses the reaction N(6)-[(R)-S(8)-aminomethyldihydrolipoyl]-L-lysyl-[protein] + (6S)-5,6,7,8-tetrahydrofolate = N(6)-[(R)-dihydrolipoyl]-L-lysyl-[protein] + (6R)-5,10-methylene-5,6,7,8-tetrahydrofolate + NH4(+). In terms of biological role, the glycine cleavage system catalyzes the degradation of glycine. The polypeptide is Aminomethyltransferase (Francisella tularensis subsp. tularensis (strain FSC 198)).